Here is a 475-residue protein sequence, read N- to C-terminus: Aspartyl/glutamyl-tRNA(Asn/Gln) amidotransferase subunit B (475 aa).

Belongs to the GatB/GatE family. GatB subfamily. In terms of assembly, heterotrimer of A, B and C subunits.

It catalyses the reaction L-glutamyl-tRNA(Gln) + L-glutamine + ATP + H2O = L-glutaminyl-tRNA(Gln) + L-glutamate + ADP + phosphate + H(+). The catalysed reaction is L-aspartyl-tRNA(Asn) + L-glutamine + ATP + H2O = L-asparaginyl-tRNA(Asn) + L-glutamate + ADP + phosphate + 2 H(+). Its function is as follows. Allows the formation of correctly charged Asn-tRNA(Asn) or Gln-tRNA(Gln) through the transamidation of misacylated Asp-tRNA(Asn) or Glu-tRNA(Gln) in organisms which lack either or both of asparaginyl-tRNA or glutaminyl-tRNA synthetases. The reaction takes place in the presence of glutamine and ATP through an activated phospho-Asp-tRNA(Asn) or phospho-Glu-tRNA(Gln). The polypeptide is Aspartyl/glutamyl-tRNA(Asn/Gln) amidotransferase subunit B (Thermoanaerobacter sp. (strain X514)).